A 345-amino-acid polypeptide reads, in one-letter code: MNSELFSPYTIKDVTLKNRIVMSPMCMYSSENEDGQVTNFHLVHYGTRAAGQVGLVMIEATAVLPEGRISNKDLGIWDDSLIEGLHKTTTFIHDNGAKAAIQLAHAGRKAELETDALAPSAIPFNETMKTPVEMSKHQIKDTILAFQQAAIRSKQAGFDVIEIHGAHGYLINEFLSPLSNKRTDEYGGSPENRYRFLREIIDSINEVWNGPLFVRISANDYHPDGLTVQDYVQYTKWMKEQGVDLIDCSSGAVVPARIDVYPGYQVQYAKHIKEHANIATGAVGLITTGAQAEQILNNNEADLIFIGRELLRNPYFPRIAANELGFELEEPHQYERAPGKISTNK.

23–26 (SPMC) lines the FMN pocket. Residue tyrosine 28 participates in substrate binding. The FMN site is built by alanine 60 and glutamine 102. 164–167 (HGAH) contacts substrate. FMN-binding positions include arginine 215 and 307-308 (GR).

It belongs to the NADH:flavin oxidoreductase/NADH oxidase family. NamA subfamily. As to quaternary structure, homotetramer. It depends on FMN as a cofactor.

The enzyme catalyses A + NADPH + H(+) = AH2 + NADP(+). Functionally, catalyzes the reduction of the double bond of an array of alpha,beta-unsaturated aldehydes and ketones. It also reduces the nitro group of nitroester and nitroaromatic compounds. It could have a role in detoxification processes. This Bacillus cereus (strain ZK / E33L) protein is NADPH dehydrogenase.